The primary structure comprises 377 residues: Succinyl-diaminopimelate desuccinylase (377 aa).

Zn(2+) is bound at residue His68. Asp70 is an active-site residue. Asp101 provides a ligand contact to Zn(2+). Glu135 (proton acceptor) is an active-site residue. 3 residues coordinate Zn(2+): Glu136, Glu164, and His350.

It belongs to the peptidase M20A family. DapE subfamily. In terms of assembly, homodimer. The cofactor is Zn(2+). It depends on Co(2+) as a cofactor.

The catalysed reaction is N-succinyl-(2S,6S)-2,6-diaminopimelate + H2O = (2S,6S)-2,6-diaminopimelate + succinate. It functions in the pathway amino-acid biosynthesis; L-lysine biosynthesis via DAP pathway; LL-2,6-diaminopimelate from (S)-tetrahydrodipicolinate (succinylase route): step 3/3. Catalyzes the hydrolysis of N-succinyl-L,L-diaminopimelic acid (SDAP), forming succinate and LL-2,6-diaminopimelate (DAP), an intermediate involved in the bacterial biosynthesis of lysine and meso-diaminopimelic acid, an essential component of bacterial cell walls. This Aliivibrio salmonicida (strain LFI1238) (Vibrio salmonicida (strain LFI1238)) protein is Succinyl-diaminopimelate desuccinylase.